The following is a 267-amino-acid chain: NAD kinase (267 aa).

D45 serves as the catalytic Proton acceptor. Residues 45–46 (DG), 121–122 (NE), R147, D149, 160–165 (TAYSKS), and A184 contribute to the NAD(+) site.

This sequence belongs to the NAD kinase family. A divalent metal cation is required as a cofactor.

The protein localises to the cytoplasm. The catalysed reaction is NAD(+) + ATP = ADP + NADP(+) + H(+). In terms of biological role, involved in the regulation of the intracellular balance of NAD and NADP, and is a key enzyme in the biosynthesis of NADP. Catalyzes specifically the phosphorylation on 2'-hydroxyl of the adenosine moiety of NAD to yield NADP. In Lactobacillus acidophilus (strain ATCC 700396 / NCK56 / N2 / NCFM), this protein is NAD kinase.